An 84-amino-acid polypeptide reads, in one-letter code: Small ribosomal subunit protein uS17 (84 aa).

This sequence belongs to the universal ribosomal protein uS17 family. As to quaternary structure, part of the 30S ribosomal subunit.

In terms of biological role, one of the primary rRNA binding proteins, it binds specifically to the 5'-end of 16S ribosomal RNA. The protein is Small ribosomal subunit protein uS17 of Hamiltonella defensa subsp. Acyrthosiphon pisum (strain 5AT).